The chain runs to 213 residues: Histone H1.2 (213 aa).

Residues M1–K17 show a composition bias toward low complexity. The interval M1–S41 is disordered. S2 bears the N-acetylserine; partial mark. S2 is subject to Phosphoserine. Position 17 is an N6-acetyllysine (K17). N6-(2-hydroxyisobutyryl)lysine occurs at positions 23, 26, and 27. At K34 the chain carries N6-(beta-hydroxybutyryl)lysine; alternate. Residue K34 is modified to N6-crotonyllysine; alternate. The residue at position 34 (K34) is an N6-methyllysine; alternate. The H15 domain maps to S36–K109. K46 carries the post-translational modification N6-(2-hydroxyisobutyryl)lysine. The residue at position 52 (K52) is an N6-(beta-hydroxybutyryl)lysine; alternate. Position 52 is an N6-(2-hydroxyisobutyryl)lysine; alternate (K52). R54 carries the post-translational modification Citrulline. At K63 the chain carries N6-(2-hydroxyisobutyryl)lysine. Position 64 is an N6-(beta-hydroxybutyryl)lysine; alternate (K64). N6-crotonyllysine; alternate is present on K64. K64 carries the post-translational modification N6-(2-hydroxyisobutyryl)lysine; alternate. Residues K75 and K81 each carry the N6-(2-hydroxyisobutyryl)lysine modification. 2 positions are modified to N6-(beta-hydroxybutyryl)lysine; alternate: K85 and K90. An N6-crotonyllysine; alternate mark is found at K85, K90, and K97. An N6-(2-hydroxyisobutyryl)lysine; alternate mark is found at K85, K90, and K97. Residues T92–K213 form a disordered region. K97 carries the N6-succinyllysine; alternate modification. S104 is subject to Phosphoserine; by PKC. K106 carries the post-translational modification N6-(beta-hydroxybutyryl)lysine. N6-(2-hydroxyisobutyryl)lysine occurs at positions 110, 117, 121, 129, and 136. Residues K119–K140 show a composition bias toward basic residues. T146 is modified (phosphothreonine). N6-(2-hydroxyisobutyryl)lysine is present on K148. A compositionally biased stretch (basic residues) spans K149–K160. An N6-crotonyllysine; alternate mark is found at K159 and K168. An N6-(2-hydroxyisobutyryl)lysine; alternate mark is found at K159 and K168. Over residues K169 to A186 the composition is skewed to basic residues. K187 is subject to N6-methyllysine; by EHMT1 and EHMT2. The residue at position 188 (S188) is an ADP-ribosylserine. The segment covering V193 to K213 has biased composition (basic residues). An N6-(2-hydroxyisobutyryl)lysine modification is found at K213.

The protein belongs to the histone H1/H5 family. Interacts with TSC22D1 isoforms 2 and 5. Post-translationally, H1 histones are progressively phosphorylated during the cell cycle, becoming maximally phosphorylated during late G2 phase and M phase, and being dephosphorylated sharply thereafter. In terms of processing, crotonylation (Kcr) is specifically present in male germ cells and marks testis-specific genes in post-meiotic cells, including X-linked genes that escape sex chromosome inactivation in haploid cells. Crotonylation marks active promoters and enhancers and confers resistance to transcriptional repressors. It is also associated with post-meiotically activated genes on autosomes. Citrullination at Arg-54 (H1R54ci) by PADI4 takes place within the DNA-binding site of H1 and results in its displacement from chromatin and global chromatin decondensation, thereby promoting pluripotency and stem cell maintenance. Post-translationally, ADP-ribosylated on Ser-188 in response to DNA damage.

The protein localises to the nucleus. It localises to the chromosome. In terms of biological role, histone H1 protein binds to linker DNA between nucleosomes forming the macromolecular structure known as the chromatin fiber. Histones H1 are necessary for the condensation of nucleosome chains into higher-order structured fibers. Also acts as a regulator of individual gene transcription through chromatin remodeling, nucleosome spacing and DNA methylation. This Homo sapiens (Human) protein is Histone H1.2.